Reading from the N-terminus, the 493-residue chain is Amphoterin-induced protein 1 (493 aa).

Residues Met1–Ala27 form the signal peptide. An LRRNT domain is found at Gly28–Gly61. Over Gly28 to Thr372 the chain is Extracellular. 2 disulfide bridges follow: Cys34-Cys40 and Cys38-Cys47. LRR repeat units lie at residues Tyr62–Thr83, Asn87–Pro108, Asn111–Gly132, Ala135–Asp156, Gln159–Lys179, and Lys186–Gln206. Residue Asn72 is glycosylated (N-linked (GlcNAc...) asparagine). The LRRCT domain occupies Asn221–Glu272. Intrachain disulfides connect Cys225–Cys253, Cys227–Cys270, and Cys290–Cys341. Residues Asn269, Asn315, Asn349, and Asn360 are each glycosylated (N-linked (GlcNAc...) asparagine). An Ig-like C2-type domain is found at Asn269 to Ser353. A helical transmembrane segment spans residues Ala373–Leu393. The Cytoplasmic portion of the chain corresponds to Thr394–Val493. The disordered stretch occupies residues Lys405–Val493. Polar residues predominate over residues Ser408–Asn424. The segment covering Gly431–Ala442 has biased composition (basic and acidic residues). Residues Ser477 and Ser481 each carry the phosphoserine modification.

The protein belongs to the immunoglobulin superfamily. AMIGO family. In terms of assembly, homodimer, and heterodimer with AMIGO2 and AMIGO3. Interacts with KCNB1.

It localises to the cell membrane. The protein localises to the perikaryon. Its subcellular location is the cell projection. The protein resides in the dendrite. It is found in the axon. Promotes growth and fasciculation of neurites from cultured hippocampal neurons. May be involved in fasciculation as well as myelination of developing neural axons. May have a role in regeneration as well as neural plasticity in the adult nervous system. May mediate homophilic as well as heterophilic cell-cell interaction and contribute to signal transduction through its intracellular domain. Assembled with KCNB1 modulates the gating characteristics of the delayed rectifier voltage-dependent potassium channel KCNB1. The sequence is that of Amphoterin-induced protein 1 from Rattus norvegicus (Rat).